A 391-amino-acid polypeptide reads, in one-letter code: Formate-dependent phosphoribosylglycinamide formyltransferase (391 aa).

N(1)-(5-phospho-beta-D-ribosyl)glycinamide-binding positions include 18–19 (EL) and glutamate 78. ATP-binding positions include arginine 110, lysine 151, 156–161 (SSGKGQ), 191–194 (EEFI), and glutamate 199. One can recognise an ATP-grasp domain in the interval 115–305 (ELAHEELGIR…EFELHLRAIL (191 aa)). Mg(2+) contacts are provided by glutamate 264 and glutamate 276. N(1)-(5-phospho-beta-D-ribosyl)glycinamide contacts are provided by residues aspartate 283, lysine 353, and 360-361 (RR).

Belongs to the PurK/PurT family. Homodimer.

It catalyses the reaction N(1)-(5-phospho-beta-D-ribosyl)glycinamide + formate + ATP = N(2)-formyl-N(1)-(5-phospho-beta-D-ribosyl)glycinamide + ADP + phosphate + H(+). The protein operates within purine metabolism; IMP biosynthesis via de novo pathway; N(2)-formyl-N(1)-(5-phospho-D-ribosyl)glycinamide from N(1)-(5-phospho-D-ribosyl)glycinamide (formate route): step 1/1. Functionally, involved in the de novo purine biosynthesis. Catalyzes the transfer of formate to 5-phospho-ribosyl-glycinamide (GAR), producing 5-phospho-ribosyl-N-formylglycinamide (FGAR). Formate is provided by PurU via hydrolysis of 10-formyl-tetrahydrofolate. This is Formate-dependent phosphoribosylglycinamide formyltransferase from Trichormus variabilis (strain ATCC 29413 / PCC 7937) (Anabaena variabilis).